We begin with the raw amino-acid sequence, 336 residues long: tRNA N6-adenosine threonylcarbamoyltransferase (336 aa).

H114 and H118 together coordinate Fe cation. Residues 136–140 (LVSGG), D169, G182, D186, and N275 each bind substrate. Fe cation is bound at residue D301.

Belongs to the KAE1 / TsaD family. Requires Fe(2+) as cofactor.

It localises to the cytoplasm. It carries out the reaction L-threonylcarbamoyladenylate + adenosine(37) in tRNA = N(6)-L-threonylcarbamoyladenosine(37) in tRNA + AMP + H(+). In terms of biological role, required for the formation of a threonylcarbamoyl group on adenosine at position 37 (t(6)A37) in tRNAs that read codons beginning with adenine. Is involved in the transfer of the threonylcarbamoyl moiety of threonylcarbamoyl-AMP (TC-AMP) to the N6 group of A37, together with TsaE and TsaB. TsaD likely plays a direct catalytic role in this reaction. This chain is tRNA N6-adenosine threonylcarbamoyltransferase, found in Streptococcus mutans serotype c (strain ATCC 700610 / UA159).